A 342-amino-acid polypeptide reads, in one-letter code: Olfactory receptor 51F2 (342 aa).

Topologically, residues 1–39 (MTETSLSSQCFPMSVLNNTIAEPLIFLLMGIPGLKATQY) are extracellular. A glycan (N-linked (GlcNAc...) asparagine) is linked at asparagine 17. A helical membrane pass occupies residues 40–60 (WISIPFCLLYVVAVSGNSMIL). The Cytoplasmic portion of the chain corresponds to 61–68 (FVVLCERS). Residues 69-89 (LHKPMYYFLSMLSATDLSLSL) traverse the membrane as a helical segment. Topologically, residues 90–113 (CTLSTTLGVFWFEAREINLNACIA) are extracellular. The cysteines at positions 111 and 203 are disulfide-linked. Residues 114–134 (QMFFLHGFTFMESGVLLAMAF) form a helical membrane-spanning segment. The Cytoplasmic portion of the chain corresponds to 135–153 (DRFVAICYPLRYTTILTNA). A helical transmembrane segment spans residues 154–174 (RIAKIGMSMLIRNVAVMLPVM). Over 175-210 (LFVKRLSFCSSMVLSHSYCYHVDLIQLSCTDNRINS) the chain is Extracellular. The chain crosses the membrane as a helical span at residues 211 to 231 (ILGLFALLSTTGFDCPCILLS). Residues 232-251 (YILIIRSVLSIASSEERRKA) are Cytoplasmic-facing. The chain crosses the membrane as a helical span at residues 252-272 (FNTCTSHISAVSIFYLPLISL). The Extracellular portion of the chain corresponds to 273–287 (SLVHRYGHSAPPFVH). A helical transmembrane segment spans residues 288–308 (IIMANVFLLIPPVLNPIIYSV). The Cytoplasmic segment spans residues 309–342 (KIKQIQKAIIKVLIQKHSKSNHQLFLIRDKAIYE).

The protein belongs to the G-protein coupled receptor 1 family.

The protein resides in the cell membrane. Its function is as follows. Odorant receptor. The sequence is that of Olfactory receptor 51F2 (OR51F2) from Homo sapiens (Human).